A 496-amino-acid chain; its full sequence is NADP-dependent glyceraldehyde-3-phosphate dehydrogenase (496 aa).

Substrate is bound by residues R116 and 169–170 (NY). NADP(+) contacts are provided by K192, T195, and D230. Residue 245-249 (GGDTG) participates in NAD(+) binding. The active-site Proton acceptor is the E264. 297–299 (RCT) contributes to the substrate binding site. The active-site Nucleophile is the C298. Position 391 (E391) interacts with NADP(+). Residue R451 coordinates substrate.

This sequence belongs to the aldehyde dehydrogenase family.

It is found in the cytoplasm. It catalyses the reaction D-glyceraldehyde 3-phosphate + NADP(+) + H2O = (2R)-3-phosphoglycerate + NADPH + 2 H(+). Functionally, important as a means of generating NADPH for biosynthetic reactions. The sequence is that of NADP-dependent glyceraldehyde-3-phosphate dehydrogenase (GAPN) from Nicotiana plumbaginifolia (Leadwort-leaved tobacco).